The following is a 173-amino-acid chain: Insertion element IS150 protein InsJ (173 aa).

Belongs to the IS150/IS1296 orfA family.

The chain is Insertion element IS150 protein InsJ (insJ) from Escherichia coli (strain K12).